A 319-amino-acid polypeptide reads, in one-letter code: Bidirectional sugar transporter SWEET15 (319 aa).

The Extracellular portion of the chain corresponds to 1-10; the sequence is MAFMSMERST. A helical membrane pass occupies residues 11-31; sequence WAFTFGILGNLISLMVFLSPL. Residues 13 to 99 enclose the MtN3/slv 1 domain; the sequence is FTFGILGNLI…AMYLAYAPKS (87 aa). At 32-50 the chain is on the cytoplasmic side; that stretch reads PTFYRVYRKKSTEGFQSTP. The chain crosses the membrane as a helical span at residues 51 to 71; the sequence is YVVTLFSCMLWMYYAFVKSGA. Position 72 (glutamate 72) is a topological domain, extracellular. The chain crosses the membrane as a helical span at residues 73–93; that stretch reads LLVTINGVGCVIETVYLAMYL. Over 94-106 the chain is Cytoplasmic; sequence AYAPKSARMLTAK. Residues 107–127 traverse the membrane as a helical segment; sequence MLLGLNIGLFGVIALVTLLLS. Residues 128–134 lie on the Extracellular side of the membrane; that stretch reads RGELRVH. Residues 135-155 form a helical membrane-spanning segment; sequence VLGWICVAVSLSVFAAPLSII. The 85-residue stretch at 135–219 folds into the MtN3/slv 2 domain; the sequence is VLGWICVAVS…ALYMAYRSKK (85 aa). The Cytoplasmic portion of the chain corresponds to 156–167; the sequence is RLVIRTKSVEFM. Residues 168-188 form a helical membrane-spanning segment; sequence PFSLSFFLVLSAVIWFLYGLL. At 189 to 191 the chain is on the extracellular side; sequence KKD. Residues 192–212 traverse the membrane as a helical segment; sequence VFVALPNVLGFVFGVAQMALY. Residues 213–319 lie on the Cytoplasmic side of the membrane; it reads MAYRSKKPLV…KPDMAIVVEV (107 aa).

This sequence belongs to the SWEET sugar transporter family. Forms homooligomers and/or heterooligomers.

It localises to the cell membrane. Functionally, mediates both low-affinity uptake and efflux of sugar across the plasma membrane. This chain is Bidirectional sugar transporter SWEET15 (SWEET15), found in Oryza sativa subsp. indica (Rice).